A 596-amino-acid polypeptide reads, in one-letter code: Elongation factor 4 (596 aa).

Residues 2–184 (KQIRNFSIIA…VIVAKIPPPE (183 aa)) enclose the tr-type G domain. GTP-binding positions include 14 to 19 (DHGKST) and 131 to 134 (NKID).

The protein belongs to the TRAFAC class translation factor GTPase superfamily. Classic translation factor GTPase family. LepA subfamily.

Its subcellular location is the cell inner membrane. It carries out the reaction GTP + H2O = GDP + phosphate + H(+). Functionally, required for accurate and efficient protein synthesis under certain stress conditions. May act as a fidelity factor of the translation reaction, by catalyzing a one-codon backward translocation of tRNAs on improperly translocated ribosomes. Back-translocation proceeds from a post-translocation (POST) complex to a pre-translocation (PRE) complex, thus giving elongation factor G a second chance to translocate the tRNAs correctly. Binds to ribosomes in a GTP-dependent manner. The sequence is that of Elongation factor 4 from Shewanella baltica (strain OS155 / ATCC BAA-1091).